A 1180-amino-acid polypeptide reads, in one-letter code: RecBCD enzyme subunit RecB (1180 aa).

A DNA-binding and helicase activity, interacts with RecC region spans residues methionine 1–lysine 852. A UvrD-like helicase ATP-binding domain is found at threonine 3 to serine 448. Alanine 24–threonine 31 contacts ATP. Residues serine 478–glycine 745 form the UvrD-like helicase C-terminal domain. Residues asparagine 905–phenylalanine 1180 form a nuclease activity, interacts with RecD and RecA region. Mg(2+) is bound by residues histidine 964, aspartate 1075, and aspartate 1088. The active-site For nuclease activity is the aspartate 1088.

This sequence belongs to the helicase family. UvrD subfamily. In terms of assembly, heterotrimer of RecB, RecC and RecD. All subunits contribute to DNA-binding. Interacts with RecA. It depends on Mg(2+) as a cofactor.

It carries out the reaction Exonucleolytic cleavage (in the presence of ATP) in either 5'- to 3'- or 3'- to 5'-direction to yield 5'-phosphooligonucleotides.. It catalyses the reaction Couples ATP hydrolysis with the unwinding of duplex DNA by translocating in the 3'-5' direction.. The enzyme catalyses ATP + H2O = ADP + phosphate + H(+). In terms of biological role, a helicase/nuclease that prepares dsDNA breaks (DSB) for recombinational DNA repair. Binds to DSBs and unwinds DNA via a highly rapid and processive ATP-dependent bidirectional helicase activity. Unwinds dsDNA until it encounters a Chi (crossover hotspot instigator) sequence from the 3' direction. Cuts ssDNA a few nucleotides 3' to the Chi site. The properties and activities of the enzyme are changed at Chi. The Chi-altered holoenzyme produces a long 3'-ssDNA overhang and facilitates RecA-binding to the ssDNA for homologous DNA recombination and repair. Holoenzyme degrades any linearized DNA that is unable to undergo homologous recombination. In the holoenzyme this subunit contributes ATPase, 3'-5' helicase, exonuclease activity and loads RecA onto ssDNA. In Buchnera aphidicola subsp. Baizongia pistaciae (strain Bp), this protein is RecBCD enzyme subunit RecB.